The sequence spans 158 residues: Transcription factor BTF3 homolog 4 (158 aa).

One can recognise an NAC-A/B domain in the interval T33–L98. The tract at residues Q123–N158 is disordered. Acidic residues predominate over residues D134–P143.

The protein belongs to the NAC-beta family.

In Xenopus laevis (African clawed frog), this protein is Transcription factor BTF3 homolog 4 (btf3l4).